The following is a 380-amino-acid chain: MSDSPIQYRLIKKEKHTGARLGEIITPHGTFPTPMFMPVGTQATVKTQSPEELKQMGSGIILANTYHLWLRPGDELIARAGGLHKFMNWDQPILTDSGGFQVYSLADSRNITEEGVTFKNHLNGSKMFLSPEKAISIQNNLGSDIMMSFDECPQFYQPYDYVKKSIERTSRWAERGLKAHSRPHDQGLFGIVQGAGFEDLRRQSAQDLVSMDFPGYSIGGLAVGESHEEMNAVLDFTTPLLPENKPRYLMGVGAPDSLIDGVIRGVDMFDCVLPTRIARNGTCMTSEGRLVVKNAQFEEDFTPLDHNCDCYTCTNYTRAYIRHLLKADETFGLRLTSYHNLYFLVNLMKKVRQAIMDDNLLEFREDFMERYGYNRSNRNF.

The Proton acceptor role is filled by Asp96. Substrate is bound by residues 96–100 (DSGGF), Asp150, Gln193, and Gly220. The interval 251 to 257 (GVGAPDS) is RNA binding. Residue Asp270 is the Nucleophile of the active site. Residues 275-279 (TRIAR) form an RNA binding; important for wobble base 34 recognition region. Zn(2+) is bound by residues Cys308, Cys310, Cys313, and His339.

This sequence belongs to the queuine tRNA-ribosyltransferase family. In terms of assembly, homodimer. Within each dimer, one monomer is responsible for RNA recognition and catalysis, while the other monomer binds to the replacement base PreQ1. Zn(2+) is required as a cofactor.

The catalysed reaction is 7-aminomethyl-7-carbaguanine + guanosine(34) in tRNA = 7-aminomethyl-7-carbaguanosine(34) in tRNA + guanine. Its pathway is tRNA modification; tRNA-queuosine biosynthesis. In terms of biological role, catalyzes the base-exchange of a guanine (G) residue with the queuine precursor 7-aminomethyl-7-deazaguanine (PreQ1) at position 34 (anticodon wobble position) in tRNAs with GU(N) anticodons (tRNA-Asp, -Asn, -His and -Tyr). Catalysis occurs through a double-displacement mechanism. The nucleophile active site attacks the C1' of nucleotide 34 to detach the guanine base from the RNA, forming a covalent enzyme-RNA intermediate. The proton acceptor active site deprotonates the incoming PreQ1, allowing a nucleophilic attack on the C1' of the ribose to form the product. After dissociation, two additional enzymatic reactions on the tRNA convert PreQ1 to queuine (Q), resulting in the hypermodified nucleoside queuosine (7-(((4,5-cis-dihydroxy-2-cyclopenten-1-yl)amino)methyl)-7-deazaguanosine). The protein is Queuine tRNA-ribosyltransferase of Streptococcus gordonii (strain Challis / ATCC 35105 / BCRC 15272 / CH1 / DL1 / V288).